Reading from the N-terminus, the 262-residue chain is uncharacterized protein (262 aa).

Positions 7, 9, 98, 138, 162, and 212 each coordinate a divalent metal cation.

It belongs to the metallo-dependent hydrolases superfamily. TatD-type hydrolase family. A divalent metal cation serves as cofactor.

This is an uncharacterized protein from Haemophilus influenzae (strain ATCC 51907 / DSM 11121 / KW20 / Rd).